Reading from the N-terminus, the 146-residue chain is MATPEASGSGEKVEGSEPSVTYYRLEEVAKRNSAEETWMVIHGRVYDITRFLSEHPGGEEVLLEQAGADATESFEDVGHSPDAREMLKQYYIGDVHPSDLKPKGDDKDPSKNNSCQSSWAYWFVPIVGAILIGFLYRHFWADSKSS.

The propeptide occupies M1–E11. The residue at position 19 (S19) is a Phosphoserine. Positions V20–H96 constitute a Cytochrome b5 heme-binding domain. An N6-acetyllysine modification is found at K30. The residue at position 33 (S33) is a Phosphoserine. The heme site is built by H55 and H79. A Phosphoserine modification is found at S80. A helical membrane pass occupies residues W119–Y136.

Belongs to the cytochrome b5 family. Component of a complex composed of cytochrome b5, NADH-cytochrome b5 reductase (CYB5R3) and MTARC2.

The protein resides in the mitochondrion outer membrane. Functionally, cytochrome b5 is a membrane-bound hemoprotein functioning as an electron carrier for several membrane-bound oxygenases. This chain is Cytochrome b5 type B (Cyb5b), found in Mus musculus (Mouse).